The following is a 946-amino-acid chain: Inhibin beta chain (946 aa).

Disordered regions lie at residues Val115–Ser142 and Lys174–Arg194. Residues Val128–Ser142 are compositionally biased toward low complexity. 4 N-linked (GlcNAc...) asparagine glycosylation sites follow: Asn208, Asn217, Asn271, and Asn389. Residues Ser436–Tyr462 are disordered. Positions Gly447–His459 are enriched in basic and acidic residues. N-linked (GlcNAc...) asparagine glycans are attached at residues Asn471, Asn484, Asn542, Asn561, Asn566, Asn732, and Asn804. Intrachain disulfides connect Cys837–Cys846, Cys845–Cys912, Cys874–Cys943, and Cys878–Cys945.

The protein belongs to the TGF-beta family. As to quaternary structure, homodimer or heterodimer; disulfide-linked. Cleaved in vitro by metalloproteases tok and tld to produce a 30 kDa product. Widely expressed in larval brains.

The protein resides in the secreted. In terms of biological role, controls several aspects of neuronal morphogenesis; essential for optic lobe development, EcR-B1 expression in larval brains, mushroom body remodeling, dorsal neuron morphogenesis and motoneuron axon guidance. Ligands Actbeta and daw act redundantly through the Activin receptor Babo and its transcriptional mediator Smad2 (Smox), to regulate neuroblast numbers and proliferation rates in the developing larval brain. The polypeptide is Inhibin beta chain (Actbeta) (Drosophila melanogaster (Fruit fly)).